The primary structure comprises 246 residues: E3 ubiquitin-protein ligase MARCHF2 (246 aa).

The RING-CH-type zinc-finger motif lies at 56–116 (DTPSDCPFCR…ELCHTEFAVE (61 aa)). Zn(2+) contacts are provided by cysteine 64, cysteine 67, cysteine 80, cysteine 82, histidine 90, cysteine 93, cysteine 106, and cysteine 109. Positions 121-246 (PLTEWLKDPG…LKKVAEETPV (126 aa)) are required for interaction with IKBKG. The next 2 membrane-spanning stretches (helical) occupy residues 138–158 (LCCD…SGWL) and 175–195 (AVGL…WTLV).

As to quaternary structure, interacts with STX6; the interaction promotes MARCHF2-mediated ubiquitination and degradation of CFTR. Interacts with MARCHF3. Interacts with GOPC/CAL; the interaction leads to CFTR ubiquitination and degradation. Interacts with CFTR; the interaction leads to CFTR ubiqtuitination and degradation. Interacts (via PDZ domain) with DLG1 (via PDZ domains); the interaction leads to DLG1 ubiqtuitination and degradation. Interacts with ERGIC3. Interacts with ADRB2. Interacts with IKBKG/NEMO; during the late stages of macrophage viral and bacterial infection; the interaction leads to ubiquitination and degradation of IKBKG/NEMO. In terms of tissue distribution, ubiquitously expressed. Present in liver (at protein level).

The protein resides in the endoplasmic reticulum membrane. The protein localises to the lysosome membrane. It is found in the endosome membrane. Its subcellular location is the golgi apparatus membrane. It localises to the cytoplasm. The protein resides in the cell membrane. The enzyme catalyses S-ubiquitinyl-[E2 ubiquitin-conjugating enzyme]-L-cysteine + [acceptor protein]-L-lysine = [E2 ubiquitin-conjugating enzyme]-L-cysteine + N(6)-ubiquitinyl-[acceptor protein]-L-lysine.. The protein operates within protein modification; protein ubiquitination. In terms of biological role, E3 ubiquitin-protein ligase that may mediate ubiquitination of TFRC and CD86, and promote their subsequent endocytosis and sorting to lysosomes via multivesicular bodies. E3 ubiquitin ligases accept ubiquitin from an E2 ubiquitin-conjugating enzyme in the form of a thioester and then directly transfer the ubiquitin to targeted substrates. Together with GOPC/CAL mediates the ubiquitination and lysosomal degradation of CFTR. Ubiquitinates and therefore mediates the degradation of DLG1. Regulates the intracellular trafficking and secretion of alpha1-antitrypsin/SERPINA1 and HP/haptoglobin via ubiquitination and degradation of the cargo receptor ERGIC3. Negatively regulates the antiviral and antibacterial immune response by repression of the NF-kB and type 1 IFN signaling pathways, via MARCHF2-mediated K48-linked polyubiquitination of IKBKG/NEMO, resulting in its proteasomal degradation. May be involved in endosomal trafficking through interaction with STX6. This chain is E3 ubiquitin-protein ligase MARCHF2 (Marchf2), found in Rattus norvegicus (Rat).